A 359-amino-acid chain; its full sequence is 3-dehydroshikimate dehydratase (359 aa).

Belongs to the bacterial two-domain DSD family. Monomer.

It catalyses the reaction 3-dehydroshikimate = 3,4-dihydroxybenzoate + H2O. The protein operates within aromatic compound metabolism; 3,4-dihydroxybenzoate biosynthesis; 3,4-dihydroxybenzoate from 3-dehydroquinate: step 2/2. With respect to regulation, divalent cations such as Mg(2+), but also MO(2+), Mn(2+), Ba(2+), and Co(2+) activate the enzyme, whereas monovalent cations as K(+), Na(+), and NH4(+) decrease its activity slightly. Its function is as follows. 3-dehydroshikimate dehydratase; part of the qa gene cluster that mediates the catabolism of quinic acid (QA) and as such, allows the use of QA as a sole carbon source. Catalyzes the third reaction in the inducible quinic acid catabolic pathway by converting dehydroshikimate to protocatechuate. The qa cluster encodes 3 inducible enymes (qa-2, qa-3 and qa-4) catalyzing the first three reactions in the catabolism of quinic acid to protocatechuic acid (also known as 3,4-Dihydroxybenzoic acid). The protein is 3-dehydroshikimate dehydratase of Neurospora crassa (strain ATCC 24698 / 74-OR23-1A / CBS 708.71 / DSM 1257 / FGSC 987).